The chain runs to 215 residues: uncharacterized protein (215 aa).

2 consecutive transmembrane segments (helical) span residues 40-60 (VLFP…FCSL) and 72-92 (LIWF…VGYL).

The protein resides in the mitochondrion membrane. This is an uncharacterized protein from Arabidopsis thaliana (Mouse-ear cress).